We begin with the raw amino-acid sequence, 140 residues long: Nuclear receptor 2C2-associated protein (140 aa).

It belongs to the NR2C2AP family. In terms of assembly, interacts with NR2C2/TR4.

The protein resides in the nucleus. Its function is as follows. May act as a repressor of NR2C2-mediated transactivation by suppressing the binding between NR2C2/TR4 and the TR4-response element in target genes. The sequence is that of Nuclear receptor 2C2-associated protein (Nr2c2ap) from Mus musculus (Mouse).